Consider the following 119-residue polypeptide: Host cell factor C1 regulator 1 (119 aa).

The tract at residues 1 to 34 (MILQQPLERGPQGRAQRDPRAASGASGGLDAREP) is disordered. The tract at residues 57–60 (DHPY) is interaction with HCFC1. The short motif at 91–100 (IPEALRLLRL) is the Nuclear export signal element.

In terms of assembly, interacts with HCFC1.

It is found in the cytoplasm. The protein resides in the nucleus. Its function is as follows. Regulates HCFC1 activity by modulating its subcellular localization. Overexpression of HCFC1R1 leads to accumulation of HCFC1 in the cytoplasm. HCFC1R1-mediated export may provide the pool of cytoplasmic HCFC1 required for import of virion-derived VP16 into the nucleus. This Bos taurus (Bovine) protein is Host cell factor C1 regulator 1 (HCFC1R1).